The sequence spans 602 residues: GTP-binding protein 2 (602 aa).

The segment at 18–64 (GPAMGGNLKARGAGGSSSCGGPKGKKKNGRNRGGKANNPPYLPPEAE) is disordered. The span at 29-39 (GAGGSSSCGGP) shows a compositional bias: gly residues. A compositionally biased stretch (basic residues) spans 40–50 (KGKKKNGRNRG). The tr-type G domain occupies 170–398 (FLDLRVAVLG…LNILPPLTNS (229 aa)). GTP is bound by residues 179-186 (GNVDSGKS), 260-264 (DLAGH), and 316-319 (SKVD).

It belongs to the TRAFAC class translation factor GTPase superfamily. Classic translation factor GTPase family. GTPBP1 subfamily. As to expression, predominantly expressed in thymus, spleen, and testis. Expressed at lower levels in brain, heart, lung, kidney, and skeletal muscle. In testis, specifically expressed in spermatocytes and round spermatids.

The sequence is that of GTP-binding protein 2 from Mus musculus (Mouse).